The chain runs to 365 residues: tRNA N6-adenosine threonylcarbamoyltransferase (365 aa).

Fe cation contacts are provided by His119 and His123. Substrate-binding positions include 141-145 (LVSGG), Asp174, Gly187, and Asn289. Residue Asp317 participates in Fe cation binding. Residues 341–365 (SARPRWPLDKTSPALIGSGKKGAKA) are disordered.

This sequence belongs to the KAE1 / TsaD family. Requires Fe(2+) as cofactor.

It is found in the cytoplasm. It carries out the reaction L-threonylcarbamoyladenylate + adenosine(37) in tRNA = N(6)-L-threonylcarbamoyladenosine(37) in tRNA + AMP + H(+). Its function is as follows. Required for the formation of a threonylcarbamoyl group on adenosine at position 37 (t(6)A37) in tRNAs that read codons beginning with adenine. Is involved in the transfer of the threonylcarbamoyl moiety of threonylcarbamoyl-AMP (TC-AMP) to the N6 group of A37, together with TsaE and TsaB. TsaD likely plays a direct catalytic role in this reaction. The protein is tRNA N6-adenosine threonylcarbamoyltransferase of Ruegeria sp. (strain TM1040) (Silicibacter sp.).